The sequence spans 178 residues: N-alpha-acetyltransferase 80 (178 aa).

In terms of domain architecture, N-acetyltransferase spans valine 26–leucine 178. Residues arginine 48, arginine 53–serine 56, asparagine 88, and serine 98 each bind substrate. Acetyl-CoA-binding positions include valine 99–valine 101 and glycine 107–lysine 112. Serine 134 is a binding site for substrate. Residue glutamine 138 coordinates acetyl-CoA.

Belongs to the acetyltransferase family.

It carries out the reaction N-terminal L-aspartyl-L-aspartyl-L-aspartyl-[protein] + acetyl-CoA = N-terminal N-acetyl-L-aspartyl-L-aspartyl-L-aspartyl-[protein] + CoA + H(+). The catalysed reaction is N-terminal L-glutamyl-L-glutamyl-L-glutamyl-[protein] + acetyl-CoA = N-terminal N-acetyl-L-glutamyl-L-glutamyl-L-glutamyl-[protein] + CoA + H(+). Functionally, N-alpha-acetyltransferase that acetylates the amino terminal acidic residue of proteins devoid of initiator methionine. Preferentially acts on proteins starting with Asp-Asp-Asp and Glu-Glu-Glu sequences. In vitro, shows high activity towards N-terminal sequences starting with Met-Asp-Glu-Leu, Met-Glu-Glu-Glu and Met-Asp-Asp-Asp. In Drosophila melanogaster (Fruit fly), this protein is N-alpha-acetyltransferase 80.